The sequence spans 319 residues: DNA-directed RNA polymerases IV and V subunit 3B (319 aa).

The residue at position 1 (Met-1) is an N-acetylmethionine.

This sequence belongs to the archaeal Rpo3/eukaryotic RPB3 RNA polymerase subunit family. As to quaternary structure, component of the RNA polymerase IV and V complexes. Interacts with NRPB11, SHH1, GRP23 and NRPD1.

The protein localises to the nucleus. DNA-dependent RNA polymerase catalyzes the transcription of DNA into RNA using the four ribonucleoside triphosphates as substrates. Component of RNA polymerases IV and V which mediate short-interfering RNAs (siRNA) accumulation and subsequent RNA-directed DNA methylation-dependent (RdDM) transcriptional gene silencing (TGS) of endogenous repeated sequences, including transposable elements. This chain is DNA-directed RNA polymerases IV and V subunit 3B (NRPD3B), found in Arabidopsis thaliana (Mouse-ear cress).